A 520-amino-acid polypeptide reads, in one-letter code: MLLFLLITLLSAIFIFAKRHYTQWQRLGLVSDEAVIPFGSLAKVFRKERPFGLVMYDLYEKFQEQVVGIYLFFKPALLIRDAELARQILTSDFNSFHDRGIYVDEKNDPMSANLFALEGQSWRTLRMKLTPSFSSGKLKGMFETVDDVGNKLLEYLNNQLKDGQTHVLDIKSILTTYAIDIIGSVIFGLEIDSFTNPDNEFRVLSDRSFDNESRSFLSKLQNLTNFVCPPIAKLLTRLGTKEPVVYRLRDIVKRTIEFREENNVVRKDLLHLLIQLRNTGKISDDNDNLWNKVESTATNLKAMSIDMIASNSFLFYIAGSETTASSTSFTIYELAMNPEALKKAQNEVDECLKKHGIKPDGRITYEAIQDMKYLDLCVKETTRKYPGLPFLNRQCTQDFKVPNSKFTIKKDTNVIISLLGLHRDAKYFPEPLAYKPERFADETKDYDAAAYMPFGEGPRHCIAQRMGVMNTKVALAKILANFNIEPMPHKEAEFQFNTAPVLVPVNGLRVGLSKRSFNRR.

Heme is bound at residue Cys461.

Belongs to the cytochrome P450 family. Heme is required as a cofactor.

The protein resides in the endoplasmic reticulum membrane. Its subcellular location is the microsome membrane. Its function is as follows. Metabolizes pyrethroid insecticides and other xenobiotics. In Musca domestica (House fly), this protein is Cytochrome P450 6d3 (CYP6D3).